The chain runs to 70 residues: Small ribosomal subunit protein bS21 (70 aa).

The segment at 40–70 (KPTAERKRKHAAAVKRHYKRIRSQQLPPRLY) is disordered. Residues 45–61 (RKRKHAAAVKRHYKRIR) are compositionally biased toward basic residues.

Belongs to the bacterial ribosomal protein bS21 family.

The sequence is that of Small ribosomal subunit protein bS21 from Bordetella parapertussis (strain 12822 / ATCC BAA-587 / NCTC 13253).